Reading from the N-terminus, the 390-residue chain is Succinate--CoA ligase [ADP-forming] subunit beta (390 aa).

Residues 9 to 248 (KEILRRHKAN…ITEEDPLEVQ (240 aa)) form the ATP-grasp domain. ATP-binding positions include Lys-50, 57-59 (GRG), Glu-103, Ile-106, and Glu-111. Positions 203 and 217 each coordinate Mg(2+). Residues Asn-268 and 325 to 327 (GIV) contribute to the substrate site.

This sequence belongs to the succinate/malate CoA ligase beta subunit family. Heterotetramer of two alpha and two beta subunits. It depends on Mg(2+) as a cofactor.

It catalyses the reaction succinate + ATP + CoA = succinyl-CoA + ADP + phosphate. It carries out the reaction GTP + succinate + CoA = succinyl-CoA + GDP + phosphate. Its pathway is carbohydrate metabolism; tricarboxylic acid cycle; succinate from succinyl-CoA (ligase route): step 1/1. In terms of biological role, succinyl-CoA synthetase functions in the citric acid cycle (TCA), coupling the hydrolysis of succinyl-CoA to the synthesis of either ATP or GTP and thus represents the only step of substrate-level phosphorylation in the TCA. The beta subunit provides nucleotide specificity of the enzyme and binds the substrate succinate, while the binding sites for coenzyme A and phosphate are found in the alpha subunit. In Leptospira interrogans serogroup Icterohaemorrhagiae serovar copenhageni (strain Fiocruz L1-130), this protein is Succinate--CoA ligase [ADP-forming] subunit beta.